A 272-amino-acid polypeptide reads, in one-letter code: Undecaprenyl-diphosphatase (272 aa).

The next 8 membrane-spanning stretches (helical) occupy residues 1–21, 39–59, 91–111, 117–137, 151–171, 196–216, 228–248, and 251–271; these read MSTL…FLPI, QGLA…MMYF, WWIL…KDFI, SALV…FADI, LGLK…IPGT, FLLS…KLIL, LGSL…LILL, and LGMM…LWFI.

It belongs to the UppP family.

It is found in the cell inner membrane. The enzyme catalyses di-trans,octa-cis-undecaprenyl diphosphate + H2O = di-trans,octa-cis-undecaprenyl phosphate + phosphate + H(+). Functionally, catalyzes the dephosphorylation of undecaprenyl diphosphate (UPP). Confers resistance to bacitracin. This is Undecaprenyl-diphosphatase from Colwellia psychrerythraea (strain 34H / ATCC BAA-681) (Vibrio psychroerythus).